A 148-amino-acid chain; its full sequence is Nucleoside diphosphate kinase 1 (148 aa).

ATP is bound by residues K9, F57, R85, T91, R102, and N112. The Pros-phosphohistidine intermediate role is filled by H115.

This sequence belongs to the NDK family. It depends on Mg(2+) as a cofactor. In terms of processing, the N-terminus is blocked.

It carries out the reaction a 2'-deoxyribonucleoside 5'-diphosphate + ATP = a 2'-deoxyribonucleoside 5'-triphosphate + ADP. The catalysed reaction is a ribonucleoside 5'-diphosphate + ATP = a ribonucleoside 5'-triphosphate + ADP. Major role in the synthesis of nucleoside triphosphates other than ATP. The ATP gamma phosphate is transferred to the NDP beta phosphate via a ping-pong mechanism, using a phosphorylated active-site intermediate. In Spinacia oleracea (Spinach), this protein is Nucleoside diphosphate kinase 1 (NDPK1).